A 79-amino-acid polypeptide reads, in one-letter code: Sec-independent protein translocase protein TatA (79 aa).

Residues 1–21 form a helical membrane-spanning segment; sequence MGGWSSPSHWLIILLIVVLLF. Positions 49–61 are enriched in basic and acidic residues; sequence EVAKNTQKIEENK. The segment at 49–79 is disordered; the sequence is EVAKNTQKIEENKNTTNNTNADASIDETKKA.

The protein belongs to the TatA/E family. In terms of assembly, the Tat system comprises two distinct complexes: a TatABC complex, containing multiple copies of TatA, TatB and TatC subunits, and a separate TatA complex, containing only TatA subunits. Substrates initially bind to the TatABC complex, which probably triggers association of the separate TatA complex to form the active translocon.

The protein localises to the cell inner membrane. Part of the twin-arginine translocation (Tat) system that transports large folded proteins containing a characteristic twin-arginine motif in their signal peptide across membranes. TatA could form the protein-conducting channel of the Tat system. The protein is Sec-independent protein translocase protein TatA of Campylobacter jejuni subsp. doylei (strain ATCC BAA-1458 / RM4099 / 269.97).